Here is an 872-residue protein sequence, read N- to C-terminus: MKNLSSAQIRQMWLDFWKSKGHSVEPSANLVPVNDPTLLWINSGVATLKKYFDGSVIPDNPRITNAQKSIRTNDIENVGKTARHHTMFEMLGNFSIGDYFRDEAIEWGFELLTSPEWFAFPKDKLYMTYYPDDMDSYNRWIALGVEPSHLIPLEDNFWEIGAGPSGPDTEIFFDRGTDFDPENIGIRLLEEDIENDRYIEIWNIVLSQFNADPAVPRSEYKELPNKNIDTGAGLERLAAIFQGAKTNFETDLFLPIIREVEKISGKTYDQDGDNMSFKVIADHIRALSFAIGDGALPGNEGRGYVLRRLLRRASMHGQRLGITEPFLYKLVETVGNIMESYYPEVLEKRAFIEKIVKSEEESFARTIHTGSQFAEQLMDKLAAEGKSEIDGRDIFKLYDTYGFQVELTEELAEHRGMTLDIAGFEAAMKEQQDRARASVVKGGSMGMQNETLAAITEESTFVYGQTALEASLSVIVADNARTEAVSEGQALLVFDQTPFYAEMGGQVADHGFVKNATGDIVATVIDVQKAPNGQPLHTVELSASISVGQTYTLEIETKRRKGVEKNHTATHLLHAALHNIIGEHATQAGSLNEQDFLRFDFTHFEAVTAEELRRIEEEVNEQIWNAIPVVTVETDIDTAKEMGAMALFGEKYGKEVRVVTIGDYSVELCGGTHVGNTAEIGIFKILKEEGIGSGTRRIIAVTGREAFLAYRDQEDALKEVAATIKSPQIKEVPNKVESLAQQVRDLQKENAALKEKAAAAAAGDVFKNVKDANGIRYIASQVQVSDAGALRTFADNWKQKDYSDVLVLVAAIGDKVNVLVASKSSDVHAGNLIKVLAPIVAGRGGGKPDMAMAGGSDASAIQTLLNSVANNL.

The Zn(2+) site is built by His567, His571, Cys669, and His673.

The protein belongs to the class-II aminoacyl-tRNA synthetase family. Requires Zn(2+) as cofactor.

The protein localises to the cytoplasm. It catalyses the reaction tRNA(Ala) + L-alanine + ATP = L-alanyl-tRNA(Ala) + AMP + diphosphate. In terms of biological role, catalyzes the attachment of alanine to tRNA(Ala) in a two-step reaction: alanine is first activated by ATP to form Ala-AMP and then transferred to the acceptor end of tRNA(Ala). Also edits incorrectly charged Ser-tRNA(Ala) and Gly-tRNA(Ala) via its editing domain. The sequence is that of Alanine--tRNA ligase from Streptococcus suis (strain 98HAH33).